A 401-amino-acid chain; its full sequence is Tyrosine--tRNA ligase (401 aa).

A 'HIGH' region motif is present at residues 45 to 54 (PTAPDLHLGH). The 'KMSKS' region signature appears at 230-234 (KMSKS). Lysine 233 is an ATP binding site. In terms of domain architecture, S4 RNA-binding spans 339–399 (IWLAKALVEC…GKRKFAKLKV (61 aa)).

This sequence belongs to the class-I aminoacyl-tRNA synthetase family. TyrS type 2 subfamily. As to quaternary structure, homodimer.

It localises to the cytoplasm. It carries out the reaction tRNA(Tyr) + L-tyrosine + ATP = L-tyrosyl-tRNA(Tyr) + AMP + diphosphate + H(+). Catalyzes the attachment of tyrosine to tRNA(Tyr) in a two-step reaction: tyrosine is first activated by ATP to form Tyr-AMP and then transferred to the acceptor end of tRNA(Tyr). This Campylobacter jejuni subsp. jejuni serotype O:2 (strain ATCC 700819 / NCTC 11168) protein is Tyrosine--tRNA ligase.